We begin with the raw amino-acid sequence, 304 residues long: Protease HtpX homolog (304 aa).

2 helical membrane passes run 14–34 and 39–59; these read VFIV…IGII and YLNG…IMVM. Residue H144 coordinates Zn(2+). E145 is an active-site residue. Position 148 (H148) interacts with Zn(2+). 2 consecutive transmembrane segments (helical) span residues 161 to 181 and 202 to 222; these read IALV…IFWG and LIIY…ATAI. Position 231 (E231) interacts with Zn(2+). The segment at 276–295 is disordered; sequence SPLKSKKDKPGIFDSHPPIS.

The protein belongs to the peptidase M48B family. The cofactor is Zn(2+).

The protein localises to the cell membrane. This Listeria welshimeri serovar 6b (strain ATCC 35897 / DSM 20650 / CCUG 15529 / CIP 8149 / NCTC 11857 / SLCC 5334 / V8) protein is Protease HtpX homolog.